The sequence spans 333 residues: Homeobox protein Hox-D13 (333 aa).

Positions 1–24 (MDGLRTDGGAAGAAPASSSSSSSV) are disordered. Low complexity predominate over residues 12-24 (GAAPASSSSSSSV). The segment at residues 266 to 325 (GRKKRVPYTKLQLKELENEYAINKFINKDKRRRISAATNLSERQVTIWFQNRRVKDKKIV) is a DNA-binding region (homeobox).

It belongs to the Abd-B homeobox family.

It localises to the nucleus. In terms of biological role, sequence-specific transcription factor that binds gene promoters and activates their transcription. Part of a developmental regulatory system that provides cells with specific positional identities on the anterior-posterior axis. The protein is Homeobox protein Hox-D13 (HOXD13) of Carollia perspicillata (Seba's short-tailed bat).